The primary structure comprises 610 residues: T-cell immunomodulatory protein (610 aa).

An N-terminal signal peptide occupies residues 1-32 (MAAGLLPSARAVLALLFLGLALLSVGPAPAQA). 8 N-linked (GlcNAc...) asparagine glycosylation sites follow: asparagine 35, asparagine 94, asparagine 123, asparagine 138, asparagine 145, asparagine 150, asparagine 175, and asparagine 241. The FG-GAP 1; atypical repeat unit spans residues 98-135 (LVTSVVPGDYDGDSQMDVLLTYFPQNHSNNELGAVIFW). Residues 153-183 (FHDQPLIMDFNGDLIPDVFAITNESSQPQIL) form an FG-GAP 2; atypical repeat. The FG-GAP 3; atypical repeat unit spans residues 256–291 (VVGQSAFADFDGDGHMDHLLPGCEDKDCQKSAIYLM). N-linked (GlcNAc...) asparagine glycosylation is found at asparagine 351, asparagine 369, and asparagine 480. A helical membrane pass occupies residues 564–584 (IVLLTAVALTGVCVFILAIIA).

The protein belongs to the TIP family. As to quaternary structure, interacts with RUVBL1, RUVBL2 and alpha-tubulin.

It is found in the secreted. It localises to the cell membrane. Modulator of T-cell function. Has a protective effect in graft versus host disease model. This chain is T-cell immunomodulatory protein, found in Rattus norvegicus (Rat).